Consider the following 397-residue polypeptide: S-adenosylmethionine synthase (397 aa).

Position 16 (histidine 16) interacts with ATP. Aspartate 18 lines the Mg(2+) pocket. Glutamate 44 is a binding site for K(+). 2 residues coordinate L-methionine: glutamate 57 and glutamine 100. Residues 100–110 form a flexible loop region; it reads QSPDIAQGVDN. ATP is bound by residues 175–177, 242–243, aspartate 251, 257–258, alanine 274, and lysine 278; these read DGK, RF, and RK. An L-methionine-binding site is contributed by aspartate 251. Lysine 282 contributes to the L-methionine binding site.

It belongs to the AdoMet synthase family. As to quaternary structure, homotetramer; dimer of dimers. Mg(2+) is required as a cofactor. The cofactor is K(+).

Its subcellular location is the cytoplasm. The enzyme catalyses L-methionine + ATP + H2O = S-adenosyl-L-methionine + phosphate + diphosphate. It functions in the pathway amino-acid biosynthesis; S-adenosyl-L-methionine biosynthesis; S-adenosyl-L-methionine from L-methionine: step 1/1. Its function is as follows. Catalyzes the formation of S-adenosylmethionine (AdoMet) from methionine and ATP. The overall synthetic reaction is composed of two sequential steps, AdoMet formation and the subsequent tripolyphosphate hydrolysis which occurs prior to release of AdoMet from the enzyme. This Leifsonia xyli subsp. xyli (strain CTCB07) protein is S-adenosylmethionine synthase.